We begin with the raw amino-acid sequence, 434 residues long: dTDP-D-glucose 4,6-dehydratase (434 aa).

Substrate is bound at residue T134. D135 serves as the catalytic Proton donor. Active-site proton acceptor residues include E136 and Y169. Residues 286–309 (NNNNNNNNNNNNNNNNNNNNNNNN) are compositionally biased toward low complexity. A disordered region spans residues 286–310 (NNNNNNNNNNNNNNNNNNNNNNNND).

The protein belongs to the NAD(P)-dependent epimerase/dehydratase family. dTDP-glucose dehydratase subfamily. NAD(+) is required as a cofactor.

It carries out the reaction dTDP-alpha-D-glucose = dTDP-4-dehydro-6-deoxy-alpha-D-glucose + H2O. The sequence is that of dTDP-D-glucose 4,6-dehydratase (tgds) from Dictyostelium discoideum (Social amoeba).